A 414-amino-acid polypeptide reads, in one-letter code: TAR DNA-binding protein 43 (414 aa).

Residues K79, K84, K95, K102, and K181 each participate in a glycyl lysine isopeptide (Lys-Gly) (interchain with G-Cter in SUMO2) cross-link. Residues 82 to 98 (KRKMDETDASSAVKVKR) carry the Nuclear localization signal motif. 2 RRM domains span residues 104-200 (SDLI…RCTE) and 191-262 (RKVF…NAEP). S183 carries the post-translational modification Phosphoserine. The interval 216–414 (DVMDVFIPKP…MDSKSSGWGM (199 aa)) is interaction with UBQLN2. A Nuclear export signal motif is present at residues 239-250 (IAQSLCGEDLII). A compositionally biased stretch (basic and acidic residues) spans 261 to 274 (EPKHNSNRQLERSG). 2 disordered regions span residues 261-303 (EPKH…GNNQ) and 341-373 (ASQQ…GNNS). K263 participates in a covalent cross-link: Glycyl lysine isopeptide (Lys-Gly) (interchain with G-Cter in SUMO2). The segment covering 275–303 (RFGGNPGGFGNQGGFGNSRGGGAGLGNNQ) has biased composition (gly residues). The residue at position 292 (S292) is a Phosphoserine. R293 bears the Omega-N-methylarginine mark. A compositionally biased stretch (low complexity) spans 342 to 358 (SQQNQSGPSGNNQNQGN).

As to quaternary structure, homodimer. Homooligomer (via its N-terminal domain). Interacts with BRDT. Binds specifically to pyrimidine-rich motifs of TAR DNA and to single stranded TG repeated sequences. Binds to RNA, specifically to UG repeated sequences with a minimum of six contiguous repeats. Interacts with ATXN2; the interaction is RNA-dependent. Interacts with MATR3. Interacts with UBQLN2. Interacts with HNRNPA2B1. Interacts with ZNF106. Interacts with CNOT7/CAF1. Interacts with CRY2. Interacts with PPIA/CYPA; the interaction is dependent on RNA-binding activity of TARDBP and PPIase activity of PPIA/CYPA and acetylation of PPIA/CYPA at 'Lys-125' favors the interaction. Hyperphosphorylated in hippocampus, neocortex, and spinal cord from individuals affected with ALS and FTLDU. Phosphorylated upon cellular stress. Post-translationally, ubiquitinated in hippocampus, neocortex, and spinal cord from individuals affected with ALS and FTLDU. In terms of processing, cleaved to generate C-terminal fragments in hippocampus, neocortex, and spinal cord from individuals affected with ALS and FTLDU. As to expression, ubiquitously expressed. In particular, expression is high in pancreas, placenta, lung, genital tract and spleen.

The protein resides in the nucleus. Its subcellular location is the cytoplasm. It is found in the stress granule. It localises to the mitochondrion. Functionally, RNA-binding protein that is involved in various steps of RNA biogenesis and processing. Preferentially binds, via its two RNA recognition motifs RRM1 and RRM2, to GU-repeats on RNA molecules predominantly localized within long introns and in the 3'UTR of mRNAs. In turn, regulates the splicing of many non-coding and protein-coding RNAs including proteins involved in neuronal survival, as well as mRNAs that encode proteins relevant for neurodegenerative diseases. Plays a role in maintaining mitochondrial homeostasis by regulating the processing of mitochondrial transcripts. Also regulates mRNA stability by recruiting CNOT7/CAF1 deadenylase on mRNA 3'UTR leading to poly(A) tail deadenylation and thus shortening. In response to oxidative insult, associates with stalled ribosomes localized to stress granules (SGs) and contributes to cell survival. Also participates in the normal skeletal muscle formation and regeneration, forming cytoplasmic myo-granules and binding mRNAs that encode sarcomeric proteins. Plays a role in the maintenance of the circadian clock periodicity via stabilization of the CRY1 and CRY2 proteins in a FBXL3-dependent manner. Negatively regulates the expression of CDK6. Regulates the expression of HDAC6, ATG7 and VCP in a PPIA/CYPA-dependent manner. This is TAR DNA-binding protein 43 from Homo sapiens (Human).